Reading from the N-terminus, the 151-residue chain is Putative esterase VNG_1336C (151 aa).

Belongs to the thioesterase PaaI family.

The polypeptide is Putative esterase VNG_1336C (Halobacterium salinarum (strain ATCC 700922 / JCM 11081 / NRC-1) (Halobacterium halobium)).